A 258-amino-acid polypeptide reads, in one-letter code: Ferredoxin--NADP reductase (258 aa).

An FAD-binding FR-type domain is found at 2–102 (SNLYTERVLS…RKPTGTLVHD (101 aa)). Arg-51, Ala-52, Tyr-53, Ser-54, Phe-67, Ile-69, Leu-76, Thr-77, and Thr-117 together coordinate FAD. Residues Val-144, Arg-145, Thr-181, Arg-182, Arg-190, Ser-223, Glu-227, Phe-255, and Glu-257 each coordinate NADP(+). Residues Phe-255, Glu-257, and Lys-258 each coordinate FAD.

The protein belongs to the ferredoxin--NADP reductase type 1 family. Monomer. Requires FAD as cofactor.

It carries out the reaction 2 reduced [2Fe-2S]-[ferredoxin] + NADP(+) + H(+) = 2 oxidized [2Fe-2S]-[ferredoxin] + NADPH. Functionally, transports electrons between ferredoxin and NADPH. Provides electrons to heme oxygenase (pigA) allowing anaerobic heme degradation. Provides electrons necessary to reduce and mobilize Fe(3+) in a heterooligomeric bacterioferritin (BFR) complex to Fe(2+). Reduction of Fe(3+) in a pure FtnA BFR does not require Bfd. Reduction of Fe(3+) in a pure BfrB BFR does require Bfd. The chain is Ferredoxin--NADP reductase from Pseudomonas aeruginosa (strain ATCC 15692 / DSM 22644 / CIP 104116 / JCM 14847 / LMG 12228 / 1C / PRS 101 / PAO1).